The following is a 136-amino-acid chain: Large ribosomal subunit protein uL16c (136 aa).

The disordered stretch occupies residues 1–20; the sequence is MLSPKRTRFRKQHRGRMKGK.

It belongs to the universal ribosomal protein uL16 family. As to quaternary structure, part of the 50S ribosomal subunit.

The protein resides in the plastid. It localises to the chloroplast. The chain is Large ribosomal subunit protein uL16c from Lolium perenne (Perennial ryegrass).